Consider the following 367-residue polypeptide: DNA replication and repair protein RecF (367 aa).

Position 30 to 37 (30 to 37 (GNNGEGKT)) interacts with ATP.

It belongs to the RecF family.

The protein resides in the cytoplasm. In terms of biological role, the RecF protein is involved in DNA metabolism; it is required for DNA replication and normal SOS inducibility. RecF binds preferentially to single-stranded, linear DNA. It also seems to bind ATP. In Leptospira biflexa serovar Patoc (strain Patoc 1 / Ames), this protein is DNA replication and repair protein RecF.